Here is a 257-residue protein sequence, read N- to C-terminus: Type III pantothenate kinase (257 aa).

5–12 (DIGNTNIK) contributes to the ATP binding site. Position 107–110 (107–110 (GSDR)) interacts with substrate. Catalysis depends on Asp109, which acts as the Proton acceptor. Thr133 contacts ATP.

Belongs to the type III pantothenate kinase family. As to quaternary structure, homodimer. The cofactor is NH4(+). K(+) serves as cofactor.

The protein resides in the cytoplasm. It catalyses the reaction (R)-pantothenate + ATP = (R)-4'-phosphopantothenate + ADP + H(+). It participates in cofactor biosynthesis; coenzyme A biosynthesis; CoA from (R)-pantothenate: step 1/5. Catalyzes the phosphorylation of pantothenate (Pan), the first step in CoA biosynthesis. This Ehrlichia ruminantium (strain Welgevonden) protein is Type III pantothenate kinase.